Consider the following 395-residue polypeptide: S-adenosylmethionine synthase (395 aa).

H16 is a binding site for ATP. D18 is a Mg(2+) binding site. E44 provides a ligand contact to K(+). The L-methionine site is built by E57 and Q100. Positions 100-110 (QSPDIAQGVDD) are flexible loop. Residues 174-176 (DAK), 241-242 (RF), D250, 256-257 (RK), A273, and K277 each bind ATP. Position 250 (D250) interacts with L-methionine. K281 serves as a coordination point for L-methionine.

This sequence belongs to the AdoMet synthase family. As to quaternary structure, homotetramer; dimer of dimers. Mg(2+) is required as a cofactor. It depends on K(+) as a cofactor.

It localises to the cytoplasm. It catalyses the reaction L-methionine + ATP + H2O = S-adenosyl-L-methionine + phosphate + diphosphate. It functions in the pathway amino-acid biosynthesis; S-adenosyl-L-methionine biosynthesis; S-adenosyl-L-methionine from L-methionine: step 1/1. In terms of biological role, catalyzes the formation of S-adenosylmethionine (AdoMet) from methionine and ATP. The overall synthetic reaction is composed of two sequential steps, AdoMet formation and the subsequent tripolyphosphate hydrolysis which occurs prior to release of AdoMet from the enzyme. The polypeptide is S-adenosylmethionine synthase (Lactiplantibacillus plantarum (strain ATCC BAA-793 / NCIMB 8826 / WCFS1) (Lactobacillus plantarum)).